A 386-amino-acid polypeptide reads, in one-letter code: Ethanolamine kinase 2 (386 aa).

It belongs to the choline/ethanolamine kinase family. Expressed in kidney, liver, ovary, testis and prostate.

The catalysed reaction is ethanolamine + ATP = phosphoethanolamine + ADP + H(+). The protein operates within phospholipid metabolism; phosphatidylethanolamine biosynthesis; phosphatidylethanolamine from ethanolamine: step 1/3. Its function is as follows. Highly specific for ethanolamine phosphorylation. Does not have choline kinase activity. This is Ethanolamine kinase 2 (ETNK2) from Homo sapiens (Human).